Consider the following 343-residue polypeptide: Holliday junction branch migration complex subunit RuvB (343 aa).

The large ATPase domain (RuvB-L) stretch occupies residues 1–181 (MDRIIDTAAT…FGIVQRLEFY (181 aa)). Residues Ile20, Arg21, Gly62, Lys65, Thr66, Thr67, 128–130 (EDF), Arg171, Tyr181, and Arg218 each bind ATP. Position 66 (Thr66) interacts with Mg(2+). The interval 182 to 252 (SPEDLARIVR…VAQAAMQMLK (71 aa)) is small ATPAse domain (RuvB-S). The tract at residues 255–343 (QGGFDELDRR…SAFTDPEDLF (89 aa)) is head domain (RuvB-H). Arg291, Arg310, and Arg315 together coordinate DNA.

This sequence belongs to the RuvB family. Homohexamer. Forms an RuvA(8)-RuvB(12)-Holliday junction (HJ) complex. HJ DNA is sandwiched between 2 RuvA tetramers; dsDNA enters through RuvA and exits via RuvB. An RuvB hexamer assembles on each DNA strand where it exits the tetramer. Each RuvB hexamer is contacted by two RuvA subunits (via domain III) on 2 adjacent RuvB subunits; this complex drives branch migration. In the full resolvosome a probable DNA-RuvA(4)-RuvB(12)-RuvC(2) complex forms which resolves the HJ.

The protein resides in the cytoplasm. The catalysed reaction is ATP + H2O = ADP + phosphate + H(+). Its function is as follows. The RuvA-RuvB-RuvC complex processes Holliday junction (HJ) DNA during genetic recombination and DNA repair, while the RuvA-RuvB complex plays an important role in the rescue of blocked DNA replication forks via replication fork reversal (RFR). RuvA specifically binds to HJ cruciform DNA, conferring on it an open structure. The RuvB hexamer acts as an ATP-dependent pump, pulling dsDNA into and through the RuvAB complex. RuvB forms 2 homohexamers on either side of HJ DNA bound by 1 or 2 RuvA tetramers; 4 subunits per hexamer contact DNA at a time. Coordinated motions by a converter formed by DNA-disengaged RuvB subunits stimulates ATP hydrolysis and nucleotide exchange. Immobilization of the converter enables RuvB to convert the ATP-contained energy into a lever motion, pulling 2 nucleotides of DNA out of the RuvA tetramer per ATP hydrolyzed, thus driving DNA branch migration. The RuvB motors rotate together with the DNA substrate, which together with the progressing nucleotide cycle form the mechanistic basis for DNA recombination by continuous HJ branch migration. Branch migration allows RuvC to scan DNA until it finds its consensus sequence, where it cleaves and resolves cruciform DNA. The chain is Holliday junction branch migration complex subunit RuvB from Xylella fastidiosa (strain 9a5c).